Consider the following 232-residue polypeptide: MYCPQCGHQTDGGNFCEKCGSPLPGQSGHQHAAQTGAAAKQAAKQFGSFVLSVLKRPYQECKATGGEQLISAIITMVLFSLLTPLMFYILFSDGPGSVSFTAIFLEPTIYFILFLFGLHACIFFALKIAGNQVSFKDSFSRFGAFLIPFTAILILALFFFLLHTDICFTILAVGLIGAFFAIPPAMLSSYQHSYKGKVDFIYSTIVIYLIICVTFQLIIEHYVKEIFRYMLF.

Transmembrane regions (helical) follow at residues 69–91 (LISA…YILF), 104–126 (FLEP…FFAL), 139–161 (FSRF…FFFL), 166–188 (ICFT…AMLS), and 200–219 (FIYS…QLII).

The protein resides in the cell membrane. This is an uncharacterized protein from Bacillus subtilis (strain 168).